Reading from the N-terminus, the 224-residue chain is Adenylate kinase (224 aa).

10-15 lines the ATP pocket; sequence GSGKST. The NMP stretch occupies residues 30–59; it reads SSGDLIRREIERKSSLGREMEAYLSRGDLI. Residues serine 31, arginine 36, 57–59, 83–86, and glutamine 90 each bind AMP; these read DLI and GYPR. Residues 124-161 are LID; the sequence is GRRICPNCGAVYHVKYNPPKVPGICDVCGSELIQRADD. Arginine 125 contributes to the ATP binding site. Cysteine 128 and cysteine 131 together coordinate Zn(2+). 134–135 contacts ATP; sequence VY. Residues cysteine 148 and cysteine 151 each coordinate Zn(2+). AMP contacts are provided by arginine 158 and arginine 169. Glycine 197 is an ATP binding site.

It belongs to the adenylate kinase family. In terms of assembly, monomer.

It is found in the cytoplasm. The catalysed reaction is AMP + ATP = 2 ADP. The protein operates within purine metabolism; AMP biosynthesis via salvage pathway; AMP from ADP: step 1/1. Functionally, catalyzes the reversible transfer of the terminal phosphate group between ATP and AMP. Plays an important role in cellular energy homeostasis and in adenine nucleotide metabolism. This is Adenylate kinase from Thermococcus kodakarensis (strain ATCC BAA-918 / JCM 12380 / KOD1) (Pyrococcus kodakaraensis (strain KOD1)).